The sequence spans 313 residues: E3 ubiquitin-protein ligase SINA-like 2 (313 aa).

A disordered region spans residues 1–26 (MSGEASTSRRKRQRVPSSVESVENGG). The RING-type zinc-finger motif lies at 44-80 (CPICCHALTSPIFQCDNGHIACSSCCTKLRNKCPSCA). Residues 94 to 277 (VVEAVMVTCP…LKMEICIRKL (184 aa)) are SBD. The segment at 97-155 (AVMVTCPNVKHGCTEKFSYGKELIHEKDCRFALCYCPAPNCNYSGVYKDLYSHFYVNHY) adopts an SIAH-type zinc-finger fold. Zn(2+) contacts are provided by Cys102, Cys109, His121, Cys125, Cys132, Cys137, His149, and His154. The tract at residues 278–313 (KKDEEEADEDEESEEEEDDDDDDDDDDEEEDADEEE) is disordered. The span at 282–313 (EEADEDEESEEEEDDDDDDDDDDEEEDADEEE) shows a compositional bias: acidic residues.

The protein belongs to the SINA (Seven in absentia) family.

It catalyses the reaction S-ubiquitinyl-[E2 ubiquitin-conjugating enzyme]-L-cysteine + [acceptor protein]-L-lysine = [E2 ubiquitin-conjugating enzyme]-L-cysteine + N(6)-ubiquitinyl-[acceptor protein]-L-lysine.. It participates in protein modification; protein ubiquitination. In terms of biological role, E3 ubiquitin-protein ligase that mediates ubiquitination and subsequent proteasomal degradation of target proteins. E3 ubiquitin ligases accept ubiquitin from an E2 ubiquitin-conjugating enzyme in the form of a thioester and then directly transfers the ubiquitin to targeted substrates. It probably triggers the ubiquitin-mediated degradation of different substrates. The protein is E3 ubiquitin-protein ligase SINA-like 2 of Arabidopsis thaliana (Mouse-ear cress).